The sequence spans 149 residues: Angiogenin (149 aa).

An N-terminal signal peptide occupies residues 1–24 (MVMGLGPLVLIFVLGLGVTPPTLA). Q25 is modified (pyrrolidone carboxylic acid). H37 acts as the Proton acceptor in catalysis. A tRNA-binding site is contributed by R45. 3 disulfide bridges follow: C50–C105, C63–C116, and C81–C131. Positions 55–59 (KRRDL) match the Nucleolar localization signal motif. TRNA is bound by residues C105 and I127. The active-site Proton donor is the H138.

Belongs to the pancreatic ribonuclease family. In terms of assembly, homodimer. Interacts with RNH1; inhibiting ANG ribonuclease activity. Interacts with PCNA.

The protein localises to the secreted. It localises to the nucleus. Its subcellular location is the nucleolus. The protein resides in the cytoplasm. It is found in the stress granule. Its activity is regulated as follows. Has weak tRNA ribonuclease activity by itself due to partial autoinhibition by its C-terminus, which folds into a short alpha-helix that partially occludes the substrate-binding site. In absence of stress, the ribonuclease activity is inhibited by RNH1 in the cytoplasm. In response to stress, dissociates from RNH1 in the cytoplasm and associates with cytoplasmic ribosomes with vacant A-sites: ribosomes directly activate the tRNA ribonuclease activity of ANG by refolding the C-terminal alpha-helix. In response to stress, the angiogenic activity of ANG is inhibited by RNH1 in the nucleus. Secreted ribonuclease that can either promote or restrict cell proliferation of target cells, depending on the context. Endocytosed in target cells via its receptor PLXNB2 and translocates to the cytoplasm or nucleus. Under stress conditions, localizes to the cytoplasm and promotes the assembly of stress granules (SGs): specifically cleaves a subset of tRNAs within anticodon loops to produce tRNA-derived stress-induced fragments (tiRNAs), resulting in translation repression and inhibition of cell proliferation. tiRNas also prevent formation of apoptosome, thereby promoting cell survival. Preferentially cleaves RNAs between a pyrimidine and an adenosine residue, suggesting that it cleaves the anticodon loop of tRNA(Ala) (32-UUAGCAU-38) after positions 33 and 36. Cleaves a subset of tRNAs, including tRNA(Ala), tRNA(Glu), tRNA(Gly), tRNA(Lys), tRNA(Val), tRNA(His), tRNA(Asp) and tRNA(Sec). Under growth conditions and in differentiated cells, translocates to the nucleus and stimulates ribosomal RNA (rRNA) transcription, including that containing the initiation site sequences of 45S rRNA, thereby promoting cell growth and proliferation. Angiogenin induces vascularization of normal and malignant tissues via its ability to promote rRNA transcription. Involved in hematopoietic stem and progenitor cell (HSPC) growth and survival by promoting rRNA transcription in growth conditions and inhibiting translation in response to stress, respectively. Mediates the crosstalk between myeloid and intestinal epithelial cells to protect the intestinal epithelial barrier integrity: secreted by myeloid cells and promotes intestinal epithelial cells proliferation and survival. Also mediates osteoclast-endothelial cell crosstalk in growing bone: produced by osteoclasts and protects the neighboring vascular cells against senescence by promoting rRNA transcription. The sequence is that of Angiogenin (ANG) from Oryctolagus cuniculus (Rabbit).